We begin with the raw amino-acid sequence, 448 residues long: Tubulin alpha-5 chain (448 aa).

Positions 1-4 (MREC) match the MREC motif motif. A GTP-binding site is contributed by Q11. Residue K40 is modified to N6-acetyllysine. Residues E71, S140, G144, T145, T179, N206, and N228 each coordinate GTP. E71 is a Mg(2+) binding site. Residue E254 is part of the active site.

The protein belongs to the tubulin family. In terms of assembly, dimer of alpha and beta chains. A typical microtubule is a hollow water-filled tube with an outer diameter of 25 nm and an inner diameter of 15 nM. Alpha-beta heterodimers associate head-to-tail to form protofilaments running lengthwise along the microtubule wall with the beta-tubulin subunit facing the microtubule plus end conferring a structural polarity. Microtubules usually have 13 protofilaments but different protofilament numbers can be found in some organisms and specialized cells. Requires Mg(2+) as cofactor. Post-translationally, some glutamate residues at the C-terminus are polyglycylated, resulting in polyglycine chains on the gamma-carboxyl group. Glycylation is mainly limited to tubulin incorporated into axonemes (cilia and flagella) whereas glutamylation is prevalent in neuronal cells, centrioles, axonemes, and the mitotic spindle. Both modifications can coexist on the same protein on adjacent residues, and lowering polyglycylation levels increases polyglutamylation, and reciprocally. The precise function of polyglycylation is still unclear. Some glutamate residues at the C-terminus are polyglutamylated, resulting in polyglutamate chains on the gamma-carboxyl group. Polyglutamylation plays a key role in microtubule severing by spastin (SPAST). SPAST preferentially recognizes and acts on microtubules decorated with short polyglutamate tails: severing activity by SPAST increases as the number of glutamates per tubulin rises from one to eight, but decreases beyond this glutamylation threshold. In terms of processing, acetylation of alpha chains at Lys-40 is located inside the microtubule lumen. This modification has been correlated with increased microtubule stability, intracellular transport and ciliary assembly.

The protein localises to the cytoplasm. It localises to the cytoskeleton. The enzyme catalyses GTP + H2O = GDP + phosphate + H(+). Tubulin is the major constituent of microtubules, a cylinder consisting of laterally associated linear protofilaments composed of alpha- and beta-tubulin heterodimers. Microtubules grow by the addition of GTP-tubulin dimers to the microtubule end, where a stabilizing cap forms. Below the cap, tubulin dimers are in GDP-bound state, owing to GTPase activity of alpha-tubulin. This Gallus gallus (Chicken) protein is Tubulin alpha-5 chain.